Reading from the N-terminus, the 202-residue chain is Small ribosomal subunit protein uS4 (202 aa).

Residues L15–R42 form a disordered region. An S4 RNA-binding domain is found at N90–N152.

It belongs to the universal ribosomal protein uS4 family. As to quaternary structure, part of the 30S ribosomal subunit. Contacts protein S5. The interaction surface between S4 and S5 is involved in control of translational fidelity.

Functionally, one of the primary rRNA binding proteins, it binds directly to 16S rRNA where it nucleates assembly of the body of the 30S subunit. In terms of biological role, with S5 and S12 plays an important role in translational accuracy. The chain is Small ribosomal subunit protein uS4 from Synechococcus sp. (strain WH7803).